The following is a 711-amino-acid chain: Polyribonucleotide nucleotidyltransferase (711 aa).

Mg(2+) contacts are provided by Asp-486 and Asp-492. Residues Pro-553–Ile-612 enclose the KH domain. One can recognise an S1 motif domain in the interval Gly-622–Lys-690. The tract at residues Ile-689–Glu-711 is disordered. Low complexity predominate over residues Glu-694 to Glu-711.

Belongs to the polyribonucleotide nucleotidyltransferase family. Component of the RNA degradosome, which is a multiprotein complex involved in RNA processing and mRNA degradation. Requires Mg(2+) as cofactor.

Its subcellular location is the cytoplasm. It catalyses the reaction RNA(n+1) + phosphate = RNA(n) + a ribonucleoside 5'-diphosphate. Involved in mRNA degradation. Catalyzes the phosphorolysis of single-stranded polyribonucleotides processively in the 3'- to 5'-direction. This Escherichia coli O8 (strain IAI1) protein is Polyribonucleotide nucleotidyltransferase.